The primary structure comprises 944 residues: Translation initiation factor IF-2 (944 aa).

Disordered regions lie at residues 61 to 157 (IQAN…KAKQ) and 173 to 281 (TQSN…SHKI). A compositionally biased stretch (polar residues) spans 132-150 (TFENQTPPTENTPKVVSHS). A compositionally biased stretch (low complexity) spans 175-185 (SNANNASNANN). Over residues 186–203 (AKKEISEVKKQEQEIKRH) the composition is skewed to basic and acidic residues. A compositionally biased stretch (basic residues) spans 204-215 (ENIKRRTGFRVI). Over residues 244–259 (EDIKKEWQEKDKQEAK) the composition is skewed to basic and acidic residues. The region spanning 443 to 612 (ERPPVVTIMG…LIQAGIMELK (170 aa)) is the tr-type G domain. The segment at 452-459 (GHVDHGKT) is G1. Position 452-459 (452-459 (GHVDHGKT)) interacts with GTP. The interval 477–481 (GITQH) is G2. Residues 498–501 (DTPG) form a G3 region. GTP-binding positions include 498-502 (DTPGH) and 552-555 (NKMD). The G4 stretch occupies residues 552–555 (NKMD). Residues 588-590 (SAK) are G5.

Belongs to the TRAFAC class translation factor GTPase superfamily. Classic translation factor GTPase family. IF-2 subfamily.

Its subcellular location is the cytoplasm. In terms of biological role, one of the essential components for the initiation of protein synthesis. Protects formylmethionyl-tRNA from spontaneous hydrolysis and promotes its binding to the 30S ribosomal subunits. Also involved in the hydrolysis of GTP during the formation of the 70S ribosomal complex. This chain is Translation initiation factor IF-2 (infB), found in Helicobacter pylori (strain ATCC 700392 / 26695) (Campylobacter pylori).